Reading from the N-terminus, the 884-residue chain is DNA mismatch repair protein MutS (884 aa).

ATP is bound at residue 643-650; the sequence is GPNMGGKS.

This sequence belongs to the DNA mismatch repair MutS family.

This protein is involved in the repair of mismatches in DNA. It is possible that it carries out the mismatch recognition step. This protein has a weak ATPase activity. This is DNA mismatch repair protein MutS from Methylobacillus flagellatus (strain ATCC 51484 / DSM 6875 / VKM B-1610 / KT).